The sequence spans 175 residues: MSKVKKNEEALSEVLVDVNRVTKVVKGGRRFAFSAYVVVGDKAGRVGAGHGKAKEVNEARGKAKQAAKKRMMKVPLYQNRTIHHDVVGKSGAAKVILRRAKAGTGVIAGGSMRAIFDSLGVHDIVAKSIGSTNVYAMISATFDALNKLASPKSIAIRRDKKVHEISIKSYIQVNE.

An S5 DRBM domain is found at 11–74 (LSEVLVDVNR…QAAKKRMMKV (64 aa)).

This sequence belongs to the universal ribosomal protein uS5 family. As to quaternary structure, part of the 30S ribosomal subunit. Contacts proteins S4 and S8.

Functionally, with S4 and S12 plays an important role in translational accuracy. Located at the back of the 30S subunit body where it stabilizes the conformation of the head with respect to the body. The chain is Small ribosomal subunit protein uS5 from Rickettsia prowazekii (strain Madrid E).